Here is a 126-residue protein sequence, read N- to C-terminus: Holo-[acyl-carrier-protein] synthase (126 aa).

Mg(2+) contacts are provided by aspartate 8 and glutamate 57.

This sequence belongs to the P-Pant transferase superfamily. AcpS family. The cofactor is Mg(2+).

It is found in the cytoplasm. The catalysed reaction is apo-[ACP] + CoA = holo-[ACP] + adenosine 3',5'-bisphosphate + H(+). In terms of biological role, transfers the 4'-phosphopantetheine moiety from coenzyme A to a Ser of acyl-carrier-protein. The polypeptide is Holo-[acyl-carrier-protein] synthase (Leptospira interrogans serogroup Icterohaemorrhagiae serovar copenhageni (strain Fiocruz L1-130)).